The primary structure comprises 144 residues: MRYLVISLFAVSLLMAGSALVGNAADAAKAPKKAIELKHGTSKRMHVMFNHTTHKDIACEQCHHDSPAPDKPYASCTDNDCHATPGPRERDTMSMFVAYHAKDTDRSCYGCHKKMAAQHPEFTGCRPCHMSQQARKEAAASEKK.

Positions 1–24 (MRYLVISLFAVSLLMAGSALVGNA) are cleaved as a signal peptide. Heme c is bound by residues His-51, His-54, Cys-59, Cys-62, His-63, His-64, Cys-76, Cys-81, His-82, His-100, Cys-108, Cys-111, His-112, Cys-125, Cys-128, and His-129.

This sequence belongs to the cytochrome c family. Homodimer. Heterotrimer of cytochrome c3 FDH2C and formate dehydrogenase FDH2 alpha and beta subunits that forms the FdhABC(3) complex. Binds 4 heme c groups per subunit.

Its subcellular location is the periplasm. Participates in sulfate respiration coupled with phosphorylation by transferring electrons from the enzyme dehydrogenase to ferredoxin. Gamma chain of the formate dehydrogenase (FDH) that catalyzes the reversible two-electron oxidation of formate to carbon dioxide. The gamma subunit of formate dehydrogenase forms a c-type heme. In Nitratidesulfovibrio vulgaris (strain ATCC 29579 / DSM 644 / CCUG 34227 / NCIMB 8303 / VKM B-1760 / Hildenborough) (Desulfovibrio vulgaris), this protein is Cytochrome c3.